The primary structure comprises 129 residues: Ribosome-binding factor A (129 aa).

Belongs to the RbfA family. In terms of assembly, monomer. Binds 30S ribosomal subunits, but not 50S ribosomal subunits or 70S ribosomes.

The protein resides in the cytoplasm. Its function is as follows. One of several proteins that assist in the late maturation steps of the functional core of the 30S ribosomal subunit. Associates with free 30S ribosomal subunits (but not with 30S subunits that are part of 70S ribosomes or polysomes). Required for efficient processing of 16S rRNA. May interact with the 5'-terminal helix region of 16S rRNA. This Desulfosudis oleivorans (strain DSM 6200 / JCM 39069 / Hxd3) (Desulfococcus oleovorans) protein is Ribosome-binding factor A.